The sequence spans 156 residues: Small ribosomal subunit protein uS7 (156 aa).

It belongs to the universal ribosomal protein uS7 family. In terms of assembly, part of the 30S ribosomal subunit. Contacts proteins S9 and S11.

One of the primary rRNA binding proteins, it binds directly to 16S rRNA where it nucleates assembly of the head domain of the 30S subunit. Is located at the subunit interface close to the decoding center, probably blocks exit of the E-site tRNA. The sequence is that of Small ribosomal subunit protein uS7 from Alkaliphilus metalliredigens (strain QYMF).